The sequence spans 538 residues: Atos homolog protein B (538 aa).

The segment covering Met-1–Pro-18 has biased composition (low complexity). Disordered regions lie at residues Met-1–Ala-114 and Thr-133–Pro-300. Over residues His-227–Cys-238 the composition is skewed to pro residues. 2 positions are modified to phosphoserine: Ser-254 and Ser-255. The required for macropage invasion stretch occupies residues Leu-348–Thr-430. Residues Gln-436–Val-444 are transactivation domain 1 (TAD1).

This sequence belongs to the ATOS family.

The protein localises to the nucleus. Transcription regulator that may syncronize transcriptional and translational programs. The protein is Atos homolog protein B of Homo sapiens (Human).